The chain runs to 130 residues: Protachykinin-1 (130 aa).

The N-terminal stretch at 1 to 19 (MKILVAVAVFFLVSTQLFA) is a signal peptide. A propeptide spanning residues 20-56 (EEIDANDDLNYWSDWSDSDQIKEAMPEPFEHLLQRIA) is cleaved from the precursor. A methionine amide mark is found at methionine 68 and methionine 107.

Belongs to the tachykinin family. In terms of processing, the substance P form is cleaved at Pro-59 by the prolyl endopeptidase FAP (seprase) activity (in vitro). Substance P is also cleaved and degraded by Angiotensin-converting enzyme (ACE) and neprilysin (MME).

It is found in the secreted. Its function is as follows. Tachykinins are active peptides which excite neurons, evoke behavioral responses, are potent vasodilators and secretagogues, and contract (directly or indirectly) many smooth muscles. The polypeptide is Protachykinin-1 (Tac1) (Mus musculus (Mouse)).